The primary structure comprises 303 residues: Hydroxyethylthiazole kinase (303 aa).

Residues 1 to 15 (MTTASTTPNSDTSNL) show a composition bias toward polar residues. Residues 1–23 (MTTASTTPNSDTSNLHEVAPDDP) form a disordered region. Methionine 67 is a binding site for substrate. The ATP site is built by arginine 142 and serine 206. Glycine 233 contributes to the substrate binding site.

Belongs to the Thz kinase family. The cofactor is Mg(2+).

It carries out the reaction 5-(2-hydroxyethyl)-4-methylthiazole + ATP = 4-methyl-5-(2-phosphooxyethyl)-thiazole + ADP + H(+). Its pathway is cofactor biosynthesis; thiamine diphosphate biosynthesis; 4-methyl-5-(2-phosphoethyl)-thiazole from 5-(2-hydroxyethyl)-4-methylthiazole: step 1/1. In terms of biological role, catalyzes the phosphorylation of the hydroxyl group of 4-methyl-5-beta-hydroxyethylthiazole (THZ). This is Hydroxyethylthiazole kinase from Bifidobacterium animalis subsp. lactis (strain AD011).